Here is a 365-residue protein sequence, read N- to C-terminus: Caffeic acid 3-O-methyltransferase 1 (365 aa).

Residue 130–136 (MNQDKVL) coordinates substrate. The interval 162–180 (AFEYHGTDPRFNKVFNKGM) is substrate binding. Positions 208, 231, 251, 252, and 265 each coordinate S-adenosyl-L-methionine. The active-site Proton acceptor is H269.

This sequence belongs to the class I-like SAM-binding methyltransferase superfamily. Cation-independent O-methyltransferase family. COMT subfamily. In terms of assembly, homodimer. Post-translationally, the N-terminus is blocked. Xylem.

The catalysed reaction is (E)-caffeate + S-adenosyl-L-methionine = (E)-ferulate + S-adenosyl-L-homocysteine + H(+). It participates in aromatic compound metabolism; phenylpropanoid biosynthesis. Catalyzes the conversion of caffeic acid to ferulic acid and of 5-hydroxyferulic acid to sinapic acid. The resulting products may subsequently be converted to the corresponding alcohols that are incorporated into lignins. This is Caffeic acid 3-O-methyltransferase 1 (OMT1) from Populus tremuloides (Quaking aspen).